The chain runs to 224 residues: Prolactin-2C3 (224 aa).

Positions 1–29 (MLPSSIQPCSWILLLLLVNSSLLWKNVAS) are cleaved as a signal peptide. Asparagine 19 carries N-linked (GlcNAc...) asparagine glycosylation. Cysteine 33 and cysteine 40 form a disulfide bridge. N-linked (GlcNAc...) asparagine glycans are attached at residues asparagine 57, asparagine 75, and asparagine 88. 2 cysteine pairs are disulfide-bonded: cysteine 87–cysteine 199 and cysteine 216–cysteine 224.

The protein belongs to the somatotropin/prolactin family. In terms of processing, N-glycosylated and sialylated. As to expression, expressed in placenta and hair follicles, with highest expression levels detected in the outer root sheath and no expression detected in bulb. Expressed in placenta, skin wounds, keratinocytes and weakly in embryonic fibroblasts. Expressed in brain, cerebellum and in Neuro-2a cell line. Not detected in liver, kidney, ovary, pituitary gland and brain.

It is found in the secreted. It localises to the endoplasmic reticulum. Functionally, may have a role in embryonic development. It is likely to provide a growth stimulus to target cells in maternal and fetal tissues during the development of the embryo at mid-gestation. May play a role during wound healing and in the hair follicle cycle as a growth factor and/or an angiogenesis factor. May play a role in microvilli formation and cell proliferation of neuroblastoma cells. The chain is Prolactin-2C3 (Prl2c3) from Mus musculus (Mouse).